Consider the following 494-residue polypeptide: UDP-N-acetylmuramoyl-L-alanyl-D-glutamate--2,6-diaminopimelate ligase (494 aa).

Ser32 is a UDP-N-acetyl-alpha-D-muramoyl-L-alanyl-D-glutamate binding site. Gly112 to Thr118 is a binding site for ATP. UDP-N-acetyl-alpha-D-muramoyl-L-alanyl-D-glutamate is bound by residues Asn153, Thr154–Thr155, Ser181, and Arg189. Lys221 is subject to N6-carboxylysine. Residues Arg383, Asp407–Arg410, Gly459, and Glu463 contribute to the meso-2,6-diaminopimelate site. Residues Asp407–Arg410 carry the Meso-diaminopimelate recognition motif motif.

Belongs to the MurCDEF family. MurE subfamily. Requires Mg(2+) as cofactor. Carboxylation is probably crucial for Mg(2+) binding and, consequently, for the gamma-phosphate positioning of ATP.

The protein localises to the cytoplasm. It carries out the reaction UDP-N-acetyl-alpha-D-muramoyl-L-alanyl-D-glutamate + meso-2,6-diaminopimelate + ATP = UDP-N-acetyl-alpha-D-muramoyl-L-alanyl-gamma-D-glutamyl-meso-2,6-diaminopimelate + ADP + phosphate + H(+). The protein operates within cell wall biogenesis; peptidoglycan biosynthesis. In terms of biological role, catalyzes the addition of meso-diaminopimelic acid to the nucleotide precursor UDP-N-acetylmuramoyl-L-alanyl-D-glutamate (UMAG) in the biosynthesis of bacterial cell-wall peptidoglycan. The chain is UDP-N-acetylmuramoyl-L-alanyl-D-glutamate--2,6-diaminopimelate ligase from Solibacter usitatus (strain Ellin6076).